Here is a 398-residue protein sequence, read N- to C-terminus: Elongation factor Tu (398 aa).

Residues 10–207 enclose the tr-type G domain; it reads KPHVNIGTIG…TVDEYIPEPE (198 aa). The interval 19 to 26 is G1; sequence GHVDHGKT. 19 to 26 contacts GTP; it reads GHVDHGKT. Mg(2+) is bound at residue T26. Positions 63 to 67 are G2; it reads GITIN. The G3 stretch occupies residues 84 to 87; sequence DAPG. GTP contacts are provided by residues 84 to 88 and 139 to 142; these read DAPGH and NKVD. A G4 region spans residues 139-142; that stretch reads NKVD. A G5 region spans residues 177–179; sequence SAL.

Belongs to the TRAFAC class translation factor GTPase superfamily. Classic translation factor GTPase family. EF-Tu/EF-1A subfamily. Monomer.

Its subcellular location is the cytoplasm. The enzyme catalyses GTP + H2O = GDP + phosphate + H(+). In terms of biological role, GTP hydrolase that promotes the GTP-dependent binding of aminoacyl-tRNA to the A-site of ribosomes during protein biosynthesis. The sequence is that of Elongation factor Tu from Streptococcus sanguinis (strain SK36).